Consider the following 210-residue polypeptide: Somatotropin (210 aa).

The N-terminal stretch at 1-22 (MGQVFLLMPVLLVSCFLSQGAA) is a signal peptide. Position 38 (His38) interacts with Zn(2+). Residues Cys71 and Cys183 are joined by a disulfide bond. Glu192 contacts Zn(2+). The cysteines at positions 200 and 208 are disulfide-linked.

This sequence belongs to the somatotropin/prolactin family.

It is found in the secreted. Its function is as follows. Growth hormone plays an important role in growth control and is involved in the regulation of several anabolic processes. Implicated as an osmoregulatory substance important for seawater adaptation. The polypeptide is Somatotropin (gh) (Oncorhynchus keta (Chum salmon)).